The following is a 296-amino-acid chain: 33 kDa chaperonin (296 aa).

Cystine bridges form between Cys-237/Cys-239 and Cys-270/Cys-273.

Belongs to the HSP33 family. Post-translationally, under oxidizing conditions two disulfide bonds are formed involving the reactive cysteines. Under reducing conditions zinc is bound to the reactive cysteines and the protein is inactive.

The protein localises to the cytoplasm. Its function is as follows. Redox regulated molecular chaperone. Protects both thermally unfolding and oxidatively damaged proteins from irreversible aggregation. Plays an important role in the bacterial defense system toward oxidative stress. In Acetivibrio thermocellus (strain ATCC 27405 / DSM 1237 / JCM 9322 / NBRC 103400 / NCIMB 10682 / NRRL B-4536 / VPI 7372) (Clostridium thermocellum), this protein is 33 kDa chaperonin.